The sequence spans 301 residues: MAVMTPRRERSSLLSRALQVTAAAATALVTAVSLAAPAHAANPYERGPNPTDALLEASSGPFSVSEENVSRLSASGFGGGTIYYPRENNTYGAVAISPGYTGTEASIAWLGERIASHGFVVITIDTITTLDQPDSRAEQLNAALNHMINRASSTVRSRIDSSRLAVMGHSMGGGGTLRLASQRPDLKAAIPLTPWHLNKNWSSVTVPTLIIGADLDTIAPVATHAKPFYNSLPSSISKAYLELDGATHFAPNIPNKIIGKYSVAWLKRFVDNDTRYTQFLCPGPRDGLFGEVEEYRSTCPF.

The signal sequence occupies residues 1-40 (MAVMTPRRERSSLLSRALQVTAAAATALVTAVSLAAPAHA). Tyrosine 100 serves as a coordination point for poly(ethylene terephthalate). Serine 170 acts as the Nucleophile in catalysis. Poly(ethylene terephthalate) is bound by residues methionine 171 and tryptophan 195. Residues aspartate 216 and histidine 248 each act as charge relay system in the active site. Cysteine 281 and cysteine 299 are disulfide-bonded.

The protein belongs to the AB hydrolase superfamily.

It localises to the secreted. It is found in the periplasm. It carries out the reaction a butanoate ester + H2O = an aliphatic alcohol + butanoate + H(+). The catalysed reaction is (ethylene terephthalate)(n) + H2O = (ethylene terephthalate)(n-1) + 4-[(2-hydroxyethoxy)carbonyl]benzoate + H(+). The enzyme catalyses cutin + H2O = cutin monomers.. With respect to regulation, activated by magnesium ions. Activated by calcium ions. Inhibited by the serine hydrolase inhibitor phenylmethanesulfonyl fluoride (PMSF). Its function is as follows. Catalyzes the hydrolysis of cutin, a polyester that forms the structure of plant cuticle. Shows esterase activity towards p-nitrophenol-linked aliphatic esters (pNP-aliphatic esters). Also hydrolyzes the triglyceride triolein. Capable of degrading the plastic poly(ethylene terephthalate) (PET), the most abundant polyester plastic in the world. In Thermobifida fusca (strain YX), this protein is Cutinase.